A 32-amino-acid polypeptide reads, in one-letter code: Yop proteins translocation protein A (32 aa).

The protein is Yop proteins translocation protein A (yscA) of Yersinia enterocolitica serotype O:8 / biotype 1B (strain NCTC 13174 / 8081).